A 61-amino-acid chain; its full sequence is [Val1,Thr6]-bradykinyl-Gln,Ser (61 aa).

The signal sequence occupies residues 1 to 22 (MSILKKSLFLVLFLGLVSFSIC). Residues 23-50 (EEEKREAEEEENEDEIEEQSEEKKRFEP) constitute a propeptide that is removed on maturation. Residues 25 to 61 (EKREAEEEENEDEIEEQSEEKKRFEPVPPGFTPFRQS) form a disordered region. The segment covering 30–42 (EEEENEDEIEEQS) has biased composition (acidic residues). A 4-hydroxyproline; in form [Val1,Hyp2,Thr6]-Bradykinyl-Gln,Ser and [Val1,Hyp2,Thr6]-Bradykinin modification is found at Pro52.

This sequence belongs to the frog skin active peptide (FSAP) family. Bradykinin-related peptide subfamily. As to expression, expressed by the skin glands.

The protein resides in the secreted. In terms of biological role, induces contraction of rat ileum smooth muscle (EC(50)=2.73 uM) but has no activity towards smooth muscle from tail artery, urinary bladder or uterus up to concentrations of 100 uM. Binds to both bradykinin receptor B1 (BDKRB1) and B2 (BDKRB2); the effect via BDKRB1 is stronger. Functionally, [Val1,Hyp2,Thr6]-bradykinin-Gln,Ser: Induces contraction of rat ileum smooth muscle (EC(50)=710 nM) but has no activity towards smooth muscle from tail artery, urinary bladder or uterus up to concentrations of 100 uM. Binds to both bradykinin receptor B1 (BDKRB1) and B2 (BDKRB2); the effect via BDKRB1 is stronger. Induces contraction of guinea pig ileum smooth muscle. The chain is [Val1,Thr6]-bradykinyl-Gln,Ser from Pithecopus hypochondrialis (Orange-legged leaf frog).